Here is a 54-residue protein sequence, read N- to C-terminus: Small polypeptide DEVIL 12 (54 aa).

The interval 20–51 (NNKLTPNRSLKETRSRLYIIRRCLVMLLCWRE) is required for DVL/RTFL small polypeptide activity. N26 carries N-linked (GlcNAc...) asparagine glycosylation. The helical transmembrane segment at 31-48 (ETRSRLYIIRRCLVMLLC) threads the bilayer.

This sequence belongs to the DVL/RTFL small polypeptides family.

The protein localises to the cell membrane. Its function is as follows. Small polypeptide acting as a regulatory molecule which coordinates cellular responses required for differentiation, growth and development, probably by restricting polar cell proliferation in lateral organs and coordinating socket cell recruitment and differentiation at trichome sites. This is Small polypeptide DEVIL 12 from Arabidopsis thaliana (Mouse-ear cress).